A 357-amino-acid chain; its full sequence is Inositol-tetrakisphosphate 1-kinase 3 (357 aa).

2 residues coordinate 1D-myo-inositol 1,3,4-trisphosphate: Lys56 and Lys98. Residues Arg133 and Lys183 each contribute to the ATP site. His190 and Lys222 together coordinate 1D-myo-inositol 1,3,4-trisphosphate. ATP contacts are provided by residues 211–222, Ser237, and Ser262; that span reads QEFVNHGGVLFK. Mg(2+) contacts are provided by Asp302, Asp317, and Asn319. Asn319 contributes to the 1D-myo-inositol 1,3,4-trisphosphate binding site.

This sequence belongs to the ITPK1 family. Monomer. Mg(2+) is required as a cofactor.

It carries out the reaction 1D-myo-inositol 3,4,5,6-tetrakisphosphate + ATP = 1D-myo-inositol 1,3,4,5,6-pentakisphosphate + ADP + H(+). The enzyme catalyses 1D-myo-inositol 1,3,4-trisphosphate + ATP = 1D-myo-inositol 1,3,4,5-tetrakisphosphate + ADP + H(+). The catalysed reaction is 1D-myo-inositol 1,3,4-trisphosphate + ATP = 1D-myo-inositol 1,3,4,6-tetrakisphosphate + ADP + H(+). Kinase that can phosphorylate various inositol polyphosphate such as Ins(3,4,5,6)P4 or Ins(1,3,4)P3 and participates in phytic acid biosynthesis in developing seeds. Phytic acid is the primary storage form of phosphorus in cereal grains and other plant seeds. This is Inositol-tetrakisphosphate 1-kinase 3 (ITPK3) from Oryza sativa subsp. indica (Rice).